Reading from the N-terminus, the 393-residue chain is Protein TsgA (393 aa).

A run of 12 helical transmembrane segments spans residues 11 to 31 (WISF…GMVM), 51 to 71 (FLNA…EIIP), 78 to 98 (FGFI…SLAL), 101 to 121 (AAMF…TFLI), 134 to 154 (LLFT…VAAF), 162 to 182 (WYWV…LTFG), 206 to 226 (IGVL…LGFI), 245 to 265 (ALVS…SFIL), 273 to 293 (ILTV…TGTQ), 298 to 318 (WFIL…ITLG), 332 to 352 (FILT…GPIV), and 361 to 381 (LLTA…LGFV).

The protein belongs to the major facilitator superfamily. TsgA family.

The protein resides in the cell inner membrane. The chain is Protein TsgA from Salmonella agona (strain SL483).